The primary structure comprises 437 residues: Enolase (437 aa).

Glutamine 162 is a binding site for (2R)-2-phosphoglycerate. Residue glutamate 204 is the Proton donor of the active site. Mg(2+) contacts are provided by aspartate 251, glutamate 297, and aspartate 324. 4 residues coordinate (2R)-2-phosphoglycerate: lysine 349, arginine 378, serine 379, and lysine 400. Lysine 349 (proton acceptor) is an active-site residue.

The protein belongs to the enolase family. Mg(2+) is required as a cofactor.

It is found in the cytoplasm. Its subcellular location is the secreted. It localises to the cell surface. The enzyme catalyses (2R)-2-phosphoglycerate = phosphoenolpyruvate + H2O. Its pathway is carbohydrate degradation; glycolysis; pyruvate from D-glyceraldehyde 3-phosphate: step 4/5. Catalyzes the reversible conversion of 2-phosphoglycerate (2-PG) into phosphoenolpyruvate (PEP). It is essential for the degradation of carbohydrates via glycolysis. This Chlorobium phaeovibrioides (strain DSM 265 / 1930) (Prosthecochloris vibrioformis (strain DSM 265)) protein is Enolase.